The primary structure comprises 427 residues: 3-phosphoshikimate 1-carboxyvinyltransferase (427 aa).

3 residues coordinate 3-phosphoshikimate: K20, S21, and R25. Residue K20 coordinates phosphoenolpyruvate. Residues G92 and R120 each coordinate phosphoenolpyruvate. Residues S166, Q168, D312, and K339 each contribute to the 3-phosphoshikimate site. Q168 is a binding site for phosphoenolpyruvate. D312 (proton acceptor) is an active-site residue. Positions 343 and 385 each coordinate phosphoenolpyruvate.

The protein belongs to the EPSP synthase family. In terms of assembly, monomer.

It localises to the cytoplasm. It carries out the reaction 3-phosphoshikimate + phosphoenolpyruvate = 5-O-(1-carboxyvinyl)-3-phosphoshikimate + phosphate. The protein operates within metabolic intermediate biosynthesis; chorismate biosynthesis; chorismate from D-erythrose 4-phosphate and phosphoenolpyruvate: step 6/7. Its function is as follows. Catalyzes the transfer of the enolpyruvyl moiety of phosphoenolpyruvate (PEP) to the 5-hydroxyl of shikimate-3-phosphate (S3P) to produce enolpyruvyl shikimate-3-phosphate and inorganic phosphate. This Streptococcus pyogenes serotype M28 (strain MGAS6180) protein is 3-phosphoshikimate 1-carboxyvinyltransferase.